Here is a 205-residue protein sequence, read N- to C-terminus: Peptidyl-tRNA hydrolase (205 aa).

Position 14 (Y14) interacts with tRNA. Residue H19 is the Proton acceptor of the active site. TRNA contacts are provided by Y68, N70, and N116.

This sequence belongs to the PTH family. In terms of assembly, monomer.

It localises to the cytoplasm. It catalyses the reaction an N-acyl-L-alpha-aminoacyl-tRNA + H2O = an N-acyl-L-amino acid + a tRNA + H(+). Its function is as follows. Hydrolyzes ribosome-free peptidyl-tRNAs (with 1 or more amino acids incorporated), which drop off the ribosome during protein synthesis, or as a result of ribosome stalling. Catalyzes the release of premature peptidyl moieties from peptidyl-tRNA molecules trapped in stalled 50S ribosomal subunits, and thus maintains levels of free tRNAs and 50S ribosomes. This is Peptidyl-tRNA hydrolase from Caulobacter vibrioides (strain ATCC 19089 / CIP 103742 / CB 15) (Caulobacter crescentus).